A 916-amino-acid chain; its full sequence is MTEDKDAPLREDIRLLGRVLGDTVRDQHGEAAFALIERIRQTSVRFRRDDDNAARLELEGILDALSREQTIEVVRAFSYFSHLSNIAEDQHHIRRSRAHLIAGSAPREGSVAHALVRALASGLPPARLAAFFDTALISPVLTAHPTEVQRKSILNCETDIAHLLDARDRMTLTPEERQESDEALRRTVLTLWQTRMLRPAKLSVVDEVANGLSYFDATFLRELPHLYANLEDQLVSRDPALAGLELPAFLQVGSWIGGDRDGNPFVTADVLERTLAMQAGAVLGFYLDELHALGARLSLALGLVTASDALLALAARSPDHSPHRNDEPYRRAISGIYARLAATHHALLGTEPPRHPVAVAEPYAAVAELADDLDVIHRSLVANGSAALARGQLRRLRRAVRVFGFHLAPIDLRQNSEVHERVVAELLATARTGTDYATLDEAARVELLIEELATPRPLASPHVRYSDETEGELAIFRTARAAHRRYGGPAIPNCIISKTDDVSDLLELALLLKEAGLLRPHERALDVNIVPLFETIEDLANAPSVMDRLFALPGYMNLLAASRDRTHEVMLGYSDSNKDGGFLTSGWALYKAEIGLIEVFARHGIRLRLFHGRGGSVGRGGGPSYEAILAQPGGAVQGQIRLTEQGEVIAAKYGNPEVGRRNLEVIVAATLEASLLADRAPAPRVEFLDTMQALSDVAFAAYRGLVYDTEGFERYFWESTVISEIAELNIGSRPASRKKGTRIEDLRAIPWVFSWSQCRLMLPGWFGFGSAVKTWLAAHADDGIARLQAMHREWSFFAALLSNMDMVLAKTDLAIASRYAGLVKDVNLRDAIFERIRNEWHDTVDALLAITGQRELLDGNPLLKRSIRNRFPYLDPLNHVQVELLRRHRETHDDARIRLGIHISINGIAAGLRNSG.

Residues H144 and K578 contribute to the active site.

Belongs to the PEPCase type 1 family. Mg(2+) is required as a cofactor.

The enzyme catalyses oxaloacetate + phosphate = phosphoenolpyruvate + hydrogencarbonate. Functionally, forms oxaloacetate, a four-carbon dicarboxylic acid source for the tricarboxylic acid cycle. In Aromatoleum aromaticum (strain DSM 19018 / LMG 30748 / EbN1) (Azoarcus sp. (strain EbN1)), this protein is Phosphoenolpyruvate carboxylase.